Here is a 403-residue protein sequence, read N- to C-terminus: Cytochrome P450 monooxygenase ustC (403 aa).

Positions 1-18 (MSPFIFAVTLTFAILALG) are cleaved as a signal peptide. Asn-52 and Asn-92 each carry an N-linked (GlcNAc...) asparagine glycan. Residue Cys-318 participates in heme binding.

This sequence belongs to the cytochrome P450 family. It depends on heme as a cofactor.

It functions in the pathway mycotoxin biosynthesis. Cytochrome P450 monooxygenase; part of the gene cluster that mediates the biosynthesis of the secondary metabolite ustiloxin B, an antimitotic tetrapeptide. First, ustA is processed by the subtilisin-like endoprotease Kex2 that is outside the ustiloxin B gene cluster, at the C-terminal side of Arg-Lys, after transfer to Golgi apparatus through the endoplasmic reticulum (ER). Cleavage by KEX2 generates 16 peptides YAIG-I to YAIG-XVI. To process the precursor peptide further, at least two peptidases are necessary to cleave the N-terminal and C-terminal sides of the Tyr-Ala-Ile-Gly core peptide which serves as backbone for the synthesis of ustiloxin B, through cyclization and modification of the tyrosine with a non-protein coding amino acid, norvaline. One of the two peptidases must be the serine peptidase ustP; and the other pepdidase is probably ustH. Macrocyclization of the core peptide derived from ustA requires the tyrosinase ustQ, as well as the homologous oxidases ustYa and ustYb, and leads to the production of the first cyclization product N-desmethylustiloxin F. For the formation of N-desmethylustiloxin F, three oxidation steps are required, hydroxylation at the benzylic position, hydroxylation at either the aromatic ring of Tyr or beta-position of Ile, and oxidative cyclization. UstQ may catalyze the oxidation of a phenol moiety, whereas the ustYa and ustYb are most likely responsible for the remaining two-step oxidations. N-desmethylustiloxin F is then methylated by ustM to yield ustiloxin F which in turn substrate of the cytochrome P450 monooxygenase ustC which catalyzes the formation of S-deoxyustiloxin H. The flavoprotein monooxygenases ustF1 and ustF2 then participate in the modification of the side chain of S-deoxyustiloxin H, leading to the synthesis of an oxime intermediate, via ustiloxin H. Finally, carboxylative dehydration performed by the cysteine desulfurase-like protein ustD yields ustiloxin B. In Aspergillus flavus (strain ATCC 200026 / FGSC A1120 / IAM 13836 / NRRL 3357 / JCM 12722 / SRRC 167), this protein is Cytochrome P450 monooxygenase ustC.